The sequence spans 277 residues: Undecaprenyl-diphosphatase (277 aa).

Transmembrane regions (helical) follow at residues F47–I67, A85–I105, W108–W128, F187–Y207, V218–L238, and F249–I269.

Belongs to the UppP family.

It localises to the cell inner membrane. It catalyses the reaction di-trans,octa-cis-undecaprenyl diphosphate + H2O = di-trans,octa-cis-undecaprenyl phosphate + phosphate + H(+). In terms of biological role, catalyzes the dephosphorylation of undecaprenyl diphosphate (UPP). Confers resistance to bacitracin. The polypeptide is Undecaprenyl-diphosphatase (Pseudomonas aeruginosa (strain ATCC 15692 / DSM 22644 / CIP 104116 / JCM 14847 / LMG 12228 / 1C / PRS 101 / PAO1)).